The sequence spans 143 residues: MTQFDDHPLWQSSLNPADAPAVQSLSPVALAYLGDAVFELYVRCCYLFPPRRIGDFHRRVVAQVRAEQQAQILTTLLPQLTDPEKEWVRRGRNAATSTSRRANPELYQAASGLETLLGYLYLRDARRLDELLALIELPDAAPR.

Residue aspartate 35 is part of the active site.

This sequence belongs to the MrnC RNase family. Homodimer. Mg(2+) serves as cofactor.

The protein localises to the cytoplasm. Functionally, involved in correct processing of both the 5' and 3' ends of 23S rRNA precursor. Processes 30S rRNA precursor transcript even in absence of ribonuclease 3 (Rnc); Rnc processes 30S rRNA into smaller rRNA precursors. This chain is Mini-ribonuclease 3, found in Synechocystis sp. (strain ATCC 27184 / PCC 6803 / Kazusa).